Consider the following 445-residue polypeptide: Probable multidrug resistance protein YpnP (445 aa).

The next 12 membrane-spanning stretches (helical) occupy residues 15-35, 49-69, 95-115, 136-156, 168-188, 194-214, 240-260, 277-297, 314-334, 355-375, 384-404, and 411-431; these read LVLF…FQFI, LGAA…ILGL, AFVV…FFLS, LQIQ…STVL, FIAF…SVFR, AAYS…FYVI, IPAG…MSVV, LDSI…SMAG, LGVI…WVFG, LKWI…NGIV, VLVL…ALFS, and GIGL…FLYY.

Belongs to the multi antimicrobial extrusion (MATE) (TC 2.A.66.1) family.

Its subcellular location is the cell membrane. This Bacillus subtilis (strain 168) protein is Probable multidrug resistance protein YpnP (ypnP).